The primary structure comprises 186 residues: C-type lectin domain family 19 member A (186 aa).

The first 19 residues, 1–19, serve as a signal peptide directing secretion; sequence MQRWTLWAAAFLTLHSAQA. The C-type lectin domain occupies 47-179; the sequence is FKGHCYRFFP…CSRKFPFVCK (133 aa). A glycan (N-linked (GlcNAc...) asparagine) is linked at Asn-58. Cystine bridges form between Cys-68–Cys-178 and Cys-151–Cys-170.

The protein resides in the secreted. The sequence is that of C-type lectin domain family 19 member A from Homo sapiens (Human).